The primary structure comprises 117 residues: Hainantoxin-XV-5 (117 aa).

A signal peptide spans 1 to 20; it reads MKLCAVIIASLLVCVAVASS. Residues 20-55 form a disordered region; that stretch reads SSDNQKEFAQEKEMTREETQSLGEHEKDDEVTGSEE. Positions 21–56 are excised as a propeptide; it reads SDNQKEFAQEKEMTREETQSLGEHEKDDEVTGSEER. A compositionally biased stretch (basic and acidic residues) spans 23–55; the sequence is NQKEFAQEKEMTREETQSLGEHEKDDEVTGSEE. Disulfide bonds link Cys-58–Cys-72, Cys-65–Cys-78, Cys-69–Cys-115, and Cys-71–Cys-91.

This sequence belongs to the neurotoxin 03 (Tx2) family. 02 subfamily. HNTX-XV sub-subfamily. Expressed by the venom gland.

The protein localises to the secreted. Functionally, putative ion channel inhibitor. This chain is Hainantoxin-XV-5, found in Cyriopagopus hainanus (Chinese bird spider).